Reading from the N-terminus, the 228-residue chain is NAD(P)H-quinone oxidoreductase subunit K, chloroplastic (228 aa).

4 residues coordinate [4Fe-4S] cluster: Cys-43, Cys-44, Cys-108, and Cys-139.

The protein belongs to the complex I 20 kDa subunit family. As to quaternary structure, NDH is composed of at least 16 different subunits, 5 of which are encoded in the nucleus. The cofactor is [4Fe-4S] cluster.

It is found in the plastid. It localises to the chloroplast thylakoid membrane. It carries out the reaction a plastoquinone + NADH + (n+1) H(+)(in) = a plastoquinol + NAD(+) + n H(+)(out). It catalyses the reaction a plastoquinone + NADPH + (n+1) H(+)(in) = a plastoquinol + NADP(+) + n H(+)(out). In terms of biological role, NDH shuttles electrons from NAD(P)H:plastoquinone, via FMN and iron-sulfur (Fe-S) centers, to quinones in the photosynthetic chain and possibly in a chloroplast respiratory chain. The immediate electron acceptor for the enzyme in this species is believed to be plastoquinone. Couples the redox reaction to proton translocation, and thus conserves the redox energy in a proton gradient. The protein is NAD(P)H-quinone oxidoreductase subunit K, chloroplastic of Ceratophyllum demersum (Rigid hornwort).